A 311-amino-acid chain; its full sequence is Malate dehydrogenase (311 aa).

Residues 7–13 (GAAGGIG) and aspartate 34 contribute to the NAD(+) site. Substrate contacts are provided by arginine 81 and arginine 87. NAD(+)-binding positions include asparagine 94 and 117 to 119 (ITN). Residues asparagine 119 and arginine 153 each coordinate substrate. Catalysis depends on histidine 177, which acts as the Proton acceptor. Methionine 227 is a binding site for NAD(+).

It belongs to the LDH/MDH superfamily. MDH type 1 family. Homodimer.

It carries out the reaction (S)-malate + NAD(+) = oxaloacetate + NADH + H(+). Catalyzes the reversible oxidation of malate to oxaloacetate. The protein is Malate dehydrogenase of Erwinia tasmaniensis (strain DSM 17950 / CFBP 7177 / CIP 109463 / NCPPB 4357 / Et1/99).